We begin with the raw amino-acid sequence, 435 residues long: 3-ketoacyl-CoA thiolase (435 aa).

Residue Cys98 is the Acyl-thioester intermediate of the active site. Residues His391 and Cys421 each act as proton acceptor in the active site.

Belongs to the thiolase-like superfamily. Thiolase family. In terms of assembly, heterotetramer of two alpha chains (FadJ) and two beta chains (FadI).

Its subcellular location is the cytoplasm. It catalyses the reaction an acyl-CoA + acetyl-CoA = a 3-oxoacyl-CoA + CoA. It participates in lipid metabolism; fatty acid beta-oxidation. In terms of biological role, catalyzes the final step of fatty acid oxidation in which acetyl-CoA is released and the CoA ester of a fatty acid two carbons shorter is formed. In Vibrio vulnificus (strain YJ016), this protein is 3-ketoacyl-CoA thiolase.